The sequence spans 503 residues: Legumin J (503 aa).

An N-terminal signal peptide occupies residues 1-22 (MSKPFLSLLSLSLLLFASACLA). 2 disulfide bridges follow: Cys33-Cys66 and Cys109-Cys329. Positions 38 to 257 (INALEPDHRV…TFNTEEDTAK (220 aa)) constitute a Cupin type-1 1 domain. Disordered stretches follow at residues 111–140 (ETYE…RRFR), 185–235 (FYLG…EGNS), and 253–323 (EDTA…RKNG). Positions 118 to 129 (SSQSRQESRQQQ) are enriched in low complexity. Composition is skewed to basic and acidic residues over residues 254–268 (DTAK…ERSQ) and 282–300 (KGKE…HREE). Residues 301–312 (KEEEEEEEEDEE) are compositionally biased toward acidic residues. Over residues 313-323 (EKQRSEERKNG) the composition is skewed to basic and acidic residues. The region spanning 335–482 (ENIADAARAD…AFGLRQRQVT (148 aa)) is the Cupin type-1 2 domain.

This sequence belongs to the 11S seed storage protein (globulins) family. In terms of assembly, hexamer; each subunit is composed of an acidic and a basic chain derived from a single precursor and linked by a disulfide bond.

Functionally, this protein found in the seeds of many leguminous and non-leguminous plants is the source of sulfur-containing amino acids in seed meals. This chain is Legumin J (LEGJ), found in Pisum sativum (Garden pea).